The sequence spans 227 residues: NAD(P)H-quinone oxidoreductase subunit K, chloroplastic (227 aa).

Positions 43, 44, 108, and 139 each coordinate [4Fe-4S] cluster. The segment covering 173 to 192 (RSFTTNHKFQVGRSSHTGNY) has biased composition (polar residues). The interval 173-201 (RSFTTNHKFQVGRSSHTGNYDQGFLSKPP) is disordered.

It belongs to the complex I 20 kDa subunit family. In terms of assembly, NDH is composed of at least 16 different subunits, 5 of which are encoded in the nucleus. The cofactor is [4Fe-4S] cluster.

It is found in the plastid. The protein localises to the chloroplast thylakoid membrane. It carries out the reaction a plastoquinone + NADH + (n+1) H(+)(in) = a plastoquinol + NAD(+) + n H(+)(out). It catalyses the reaction a plastoquinone + NADPH + (n+1) H(+)(in) = a plastoquinol + NADP(+) + n H(+)(out). In terms of biological role, NDH shuttles electrons from NAD(P)H:plastoquinone, via FMN and iron-sulfur (Fe-S) centers, to quinones in the photosynthetic chain and possibly in a chloroplast respiratory chain. The immediate electron acceptor for the enzyme in this species is believed to be plastoquinone. Couples the redox reaction to proton translocation, and thus conserves the redox energy in a proton gradient. The sequence is that of NAD(P)H-quinone oxidoreductase subunit K, chloroplastic from Trachelium caeruleum (Blue throatwort).